The chain runs to 2837 residues: Probable polyketide synthase 3 (2837 aa).

Positions 39 to 464 (NNGIGIIGIG…GSNVCIILKD (426 aa)) constitute a Ketosynthase family 3 (KS3) domain. Residues Cys-209, His-348, and His-388 each act as for beta-ketoacyl synthase activity in the active site. The tract at residues 664-697 (GIKPTFIVGHSLGEVTAAYCSGMIDLETECYLIY) is acyl/malonyl transferase. Residue Ser-674 is the For acyl/malonyl transferase activity of the active site. Residues 962–1084 (IDILGNSITD…GNFQLFKHNG (123 aa)) are N-terminal hotdog fold. A PKS/mFAS DH domain is found at 962-1255 (IDILGNSITD…CTSLTPIQDS (294 aa)). His-995 functions as the Proton acceptor; for dehydratase activity in the catalytic mechanism. Residues 1106-1255 (NLTKLTKEDL…CTSLTPIQDS (150 aa)) form a C-terminal hotdog fold region. Asp-1169 serves as the catalytic Proton donor; for dehydratase activity. The Carrier domain occupies 2330–2407 (DNKNSVNQMF…SSIKIITNSL (78 aa)). Ser-2367 is subject to O-(pantetheine 4'-phosphoryl)serine. Residues 2464 to 2484 (KVILLSGSTGFLGGYLLLNLV) form a helical membrane-spanning segment.

It depends on pantetheine 4'-phosphate as a cofactor.

It is found in the membrane. In terms of biological role, probable polyketide synthase. This chain is Probable polyketide synthase 3 (pks3), found in Dictyostelium discoideum (Social amoeba).